Reading from the N-terminus, the 226-residue chain is MENAGKATSLQSSRDLFHRLMSENSSGGWEKSWEAGATPWDLGKPTPVIAHLVETGSLPNGRALVPGCGTGYDVVAMASPDRHVVGLDISKTAVERSTKKFSTLPNAKYFSFLSEDFFTWEPAEKFDLIFDYTFFCAFEPGVRPLWAQRMEKLLKPGGELITLMFPIDERSGGPPYEVSVSEYEKVLIPLGFEAISIVDNELAVGPRKGMEKLGRWKKSSTFHSTL.

S-adenosyl-L-methionine contacts are provided by Trp29, Trp33, Trp40, and Gly67. Ser79 bears the Phosphoserine mark. S-adenosyl-L-methionine is bound by residues Asp88, 116–117 (DF), and Tyr132.

It belongs to the class I-like SAM-binding methyltransferase superfamily. TPMT family.

The enzyme catalyses a thiol + S-adenosyl-L-methionine = a methyl thioether + S-adenosyl-L-homocysteine + H(+). Functionally, S-adenosyl-L-methionine-dependent methyltransferase. This is Probable thiol methyltransferase 2 (HOL3) from Arabidopsis thaliana (Mouse-ear cress).